The following is a 357-amino-acid chain: MTPILFIDRDGTLIEEPSDFQIDAYEKLRFVPQVIPALLKLRDAGYQFVIVTNQDGLGSDSYPRASFDGPNELMLQIFESQGITFRDVLIDCSWPQDNAPTRKPGIGLMTAYLQDRSIDWARSGMVGDRITDLQFADNLNIRGFQLRTAQFGGQWDWPGIAHALADAPRTAVVQRDTKETKIRVELDLDRAADAHISTGLPFFDHMLEQIGKHGGFALDIQAEGDLHIDEHHTIEDTGLALGQALREALGDKRGIGRYGFTLPMDETLASAALDFSGRPYFVFEGEFKRERVGDMPTELVPHFFRSLCDASGLNLNLQVRGDNDHHKVEACFKALARALRPALARQGTALPSTKGAL.

The histidinol-phosphatase stretch occupies residues 1–168 (MTPILFIDRD…GIAHALADAP (168 aa)). Asp-8 serves as the catalytic Nucleophile. Mg(2+)-binding residues include Asp-8, Asp-10, and Asp-128. Catalysis depends on Asp-10, which acts as the Proton donor. The interval 169 to 357 (RTAVVQRDTK…TALPSTKGAL (189 aa)) is imidazoleglycerol-phosphate dehydratase.

The protein in the N-terminal section; belongs to the histidinol-phosphatase family. In the C-terminal section; belongs to the imidazoleglycerol-phosphate dehydratase family. It depends on Mg(2+) as a cofactor.

The protein resides in the cytoplasm. It catalyses the reaction D-erythro-1-(imidazol-4-yl)glycerol 3-phosphate = 3-(imidazol-4-yl)-2-oxopropyl phosphate + H2O. The catalysed reaction is L-histidinol phosphate + H2O = L-histidinol + phosphate. It participates in amino-acid biosynthesis; L-histidine biosynthesis; L-histidine from 5-phospho-alpha-D-ribose 1-diphosphate: step 6/9. The protein operates within amino-acid biosynthesis; L-histidine biosynthesis; L-histidine from 5-phospho-alpha-D-ribose 1-diphosphate: step 8/9. The sequence is that of Histidine biosynthesis bifunctional protein HisB from Stenotrophomonas maltophilia (strain K279a).